Reading from the N-terminus, the 124-residue chain is Aspartate 1-decarboxylase (124 aa).

Ser-25 functions as the Schiff-base intermediate with substrate; via pyruvic acid in the catalytic mechanism. Pyruvic acid (Ser) is present on Ser-25. Thr-57 lines the substrate pocket. Tyr-58 functions as the Proton donor in the catalytic mechanism. 73 to 75 is a binding site for substrate; the sequence is GAA.

The protein belongs to the PanD family. As to quaternary structure, heterooctamer of four alpha and four beta subunits. The cofactor is pyruvate. In terms of processing, is synthesized initially as an inactive proenzyme, which is activated by self-cleavage at a specific serine bond to produce a beta-subunit with a hydroxyl group at its C-terminus and an alpha-subunit with a pyruvoyl group at its N-terminus.

It is found in the cytoplasm. It carries out the reaction L-aspartate + H(+) = beta-alanine + CO2. Its pathway is cofactor biosynthesis; (R)-pantothenate biosynthesis; beta-alanine from L-aspartate: step 1/1. Its function is as follows. Catalyzes the pyruvoyl-dependent decarboxylation of aspartate to produce beta-alanine. The polypeptide is Aspartate 1-decarboxylase (Clostridium botulinum (strain Alaska E43 / Type E3)).